The sequence spans 525 residues: GMP synthase [glutamine-hydrolyzing] (525 aa).

The Glutamine amidotransferase type-1 domain occupies 16 to 205 (PVLVVDFGAQ…LHDFAGIGAR (190 aa)). Cys-93 (nucleophile) is an active-site residue. Catalysis depends on residues His-179 and Glu-181. One can recognise a GMPS ATP-PPase domain in the interval 206 to 399 (WTPANIANAL…LGLPEEIVAR (194 aa)). An ATP-binding site is contributed by 233–239 (SGGVDSA).

Homodimer.

It carries out the reaction XMP + L-glutamine + ATP + H2O = GMP + L-glutamate + AMP + diphosphate + 2 H(+). Its pathway is purine metabolism; GMP biosynthesis; GMP from XMP (L-Gln route): step 1/1. Functionally, catalyzes the synthesis of GMP from XMP. The protein is GMP synthase [glutamine-hydrolyzing] of Mycobacterium marinum (strain ATCC BAA-535 / M).